The sequence spans 660 residues: Kinesin-like protein KIF22 (660 aa).

Positions 1–31 (MSLRAKTCPQRREMASATSGPGRCVSKGGLG) are disordered. Residues 38–363 (RVRVAVRLRP…LNFTARSKEV (326 aa)) form the Kinesin motor domain. 122–129 (GPTGAGKT) lines the ATP pocket. A disordered region spans residues 391 to 418 (PSEAKKAKGPEEESTGSPESTAAPASAS). A compositionally biased stretch (low complexity) spans 405–418 (TGSPESTAAPASAS). Serine 407, serine 422, and serine 447 each carry phosphoserine. A Glycyl lysine isopeptide (Lys-Gly) (interchain with G-Cter in SUMO2) cross-link involves residue lysine 460. The stretch at 460-505 (KRERMVLMKTVEEKNLEIERLKMKQKELEAKVLAQEAPDPREKENT) forms a coiled coil. 2 disordered regions span residues 493 to 516 (AQEAPDPREKENTPTILQPPASYS) and 534 to 567 (IQKQRESSNQIQLLKKGPKRKLEPSPESEAVEKD). Over residues 505–516 (TPTILQPPASYS) the composition is skewed to polar residues. Serine 540 and serine 576 each carry phosphoserine.

This sequence belongs to the TRAFAC class myosin-kinesin ATPase superfamily. Kinesin family. In terms of assembly, interacts with FAM83D and SIAH1. Ubiquitinated; mediated by SIAH1 and leading to its subsequent proteasomal degradation.

The protein localises to the nucleus. It localises to the cytoplasm. It is found in the cytoskeleton. Functionally, kinesin family member that is involved in spindle formation and the movements of chromosomes during mitosis and meiosis. Binds to microtubules and to DNA. Plays a role in congression of laterally attached chromosomes in NDC80-depleted cells. In Mus musculus (Mouse), this protein is Kinesin-like protein KIF22 (Kif22).